We begin with the raw amino-acid sequence, 486 residues long: Cardiolipin synthase A (486 aa).

2 helical membrane-spanning segments follow: residues 3–23 (IFYNLIKCLIFSTYWLLIANI) and 38–58 (MSWLLTIYIIPFIGISIWFFF). PLD phosphodiesterase domains are found at residues 219-246 (VDVRQHRKIILIDNYIAYSGSMNLVDPY) and 399-426 (QKGLLHSKSILVDQQLSLIGTVNLDMRS). Catalysis depends on residues histidine 224, lysine 226, aspartate 231, histidine 404, lysine 406, and aspartate 411.

Belongs to the phospholipase D family. Cardiolipin synthase subfamily. ClsA sub-subfamily.

The protein localises to the cell inner membrane. The enzyme catalyses 2 a 1,2-diacyl-sn-glycero-3-phospho-(1'-sn-glycerol) = a cardiolipin + glycerol. Functionally, catalyzes the reversible phosphatidyl group transfer from one phosphatidylglycerol molecule to another to form cardiolipin (CL) (diphosphatidylglycerol) and glycerol. The polypeptide is Cardiolipin synthase A (Buchnera aphidicola subsp. Acyrthosiphon pisum (strain APS) (Acyrthosiphon pisum symbiotic bacterium)).